Here is a 544-residue protein sequence, read N- to C-terminus: Terpene synthase 9 (544 aa).

Aspartate 296, aspartate 300, and glutamate 449 together coordinate Mg(2+). Residues 296 to 300 carry the DDXXD motif motif; sequence DDTFD.

The protein belongs to the terpene synthase family. Tpsa subfamily. Requires Mg(2+) as cofactor. Mn(2+) is required as a cofactor.

It carries out the reaction (2E,6E)-farnesyl diphosphate = (1E,4E)-germacrene B + diphosphate. The enzyme catalyses (2E)-geranyl diphosphate = terpinolene + diphosphate. It catalyses the reaction (2E)-geranyl diphosphate = limonene + diphosphate. The catalysed reaction is (2E)-geranyl diphosphate = beta-myrcene + diphosphate. It carries out the reaction (2Z,6Z)-farnesyl diphosphate = germacrene A + diphosphate. The enzyme catalyses (2Z,6Z)-farnesyl diphosphate = alpha-humulene + diphosphate. Its pathway is secondary metabolite biosynthesis; terpenoid biosynthesis. Functionally, sesquiterpene synthase involved in the biosynthesis of volatile compounds. Mediates the conversion of (2E,6E)-farnesyl diphosphate (FPP) into (1E,4E)-germacrene B, but also smaller amounts of germacrene A and C, and of (2Z,6Z)-farnesyl diphosphate ((ZZ)-FPP) into alpha-humulene, germacrene A and germacrene B. Can act with a low efficiency as a monoterpene synthase with geranyl diphosphate (GPP) as substrate, thus producing beta-myrcene, limonene and terpinolene. The chain is Terpene synthase 9 from Solanum habrochaites (Wild tomato).